The following is a 190-amino-acid chain: Elongation factor P-like protein (190 aa).

The protein belongs to the elongation factor P family.

This Cronobacter sakazakii (strain ATCC BAA-894) (Enterobacter sakazakii) protein is Elongation factor P-like protein.